A 583-amino-acid polypeptide reads, in one-letter code: Capsid vertex component 2 (583 aa).

Residues 1 to 49 (MANFIWDARILTGDGMEMFPADVKNFIAPPWPIEFWKEPVFTSNRANME) are interaction with major capsid protein/MCP.

It belongs to the herpesviridae CVC2 protein family. In terms of assembly, heterodimerizes with CVC1. Interacts with major capsid protein/MCP and triplex capsid protein 1/TRX1 at the pentamer vertices. Interacts with the large tegument protein/LTP.

It is found in the virion. The protein resides in the host nucleus. Capsid vertex-specific component that plays a role during viral DNA encapsidation, assuring correct genome cleavage and presumably stabilizing capsids that contain full-length viral genomes. Participates in the interaction between the capsid and the tegument through interaction with the large tegument protein/LTP. The sequence is that of Capsid vertex component 2 from Gallus gallus (Chicken).